A 179-amino-acid chain; its full sequence is Translation initiation factor IF-3 (179 aa).

It belongs to the IF-3 family. As to quaternary structure, monomer.

The protein localises to the cytoplasm. In terms of biological role, IF-3 binds to the 30S ribosomal subunit and shifts the equilibrium between 70S ribosomes and their 50S and 30S subunits in favor of the free subunits, thus enhancing the availability of 30S subunits on which protein synthesis initiation begins. In Buchnera aphidicola subsp. Schizaphis graminum (strain Sg), this protein is Translation initiation factor IF-3.